A 1366-amino-acid chain; its full sequence is Serine/threonine-protein kinase RUNKEL (1366 aa).

ATP-binding positions include 10–18 (IGHGKCSTV) and Lys33. The Proton acceptor role is filled by Asp121. 4 disordered regions span residues 276–356 (TKPC…VNIL), 367–386 (QKENEKENYRRPLPNSNENC), 398–502 (LDFD…DSSK), and 524–549 (PSRKSDKEAVHSLSFETPQPSDFSKK). Basic and acidic residues predominate over residues 283 to 302 (RNGDRPNKTPPKYREKDRKG). Over residues 304–313 (SKQNENSIQG) the composition is skewed to polar residues. A compositionally biased stretch (basic and acidic residues) spans 367 to 376 (QKENEKENYR). Over residues 398–414 (LDFDENNDDEGPDESEG) the composition is skewed to acidic residues. Basic and acidic residues predominate over residues 422–433 (QEERVMSHNENH). Residues 438–454 (VVSSNVPDENSSANETP) show a composition bias toward polar residues. HEAT repeat units follow at residues 595–633 (LTNGPIMLVLVKVLRLSKTPAFRVQIASLIGLLIRHSTS), 638–675 (LANSGILDSLTNGLRDKHEKVRRFSMAALGELLFYIST), 699–737 (QVSNALISLVSSVLRKGEDDLTQVYALRTIENICSQGAY), 835–872 (TEEKNLFPSLLSIIEQGTEVLRGKALLFVAFLCKNSRR), 878–907 (FCNARFLPVVDRLAKEKDSYLQQCLEAFVN), 908–945 (VIASIIPGMLDTITNDIQQLMTGRRHGPVSPLNSRAPV), 946–986 (KTNA…LVEA), 992–1018 (DDFRVTLLQVLECITGDAPLVTQNGEI), 1019–1057 (IIREILPSLAAIYNGNKDGDARFLCLKIWFDSLTILLTE), 1072–1111 (ISNSHFLPLYPALIQDEDPIPAYAQKLLVMLVEFDYIKIS), 1279–1316 (TNLPKITPILDSWRRRKSTELHLLVLKRVLHCLGYACK), and 1329–1366 (GHDVSKINAIVSEMKNSDAAGLNSIASLVAMELQRLPR).

The protein belongs to the protein kinase superfamily. Ser/Thr protein kinase family. In terms of assembly, binds to microtubules (MT). Expressed in proliferating tissues of seedlings, lateral roots, young rosette leaves, siliques, flowers, embryos and stems (including apical meristem).

It is found in the cytoplasm. Its subcellular location is the cytoskeleton. The protein resides in the phragmoplast. It localises to the spindle. The catalysed reaction is L-seryl-[protein] + ATP = O-phospho-L-seryl-[protein] + ADP + H(+). It carries out the reaction L-threonyl-[protein] + ATP = O-phospho-L-threonyl-[protein] + ADP + H(+). In terms of biological role, essential protein that regulates phragmoplast microtubule organization during cell plate expansion in cytokinesis during cell division, both somatic and syncytial. Required for endosperm cellularisation. In pollen development, involved in cellularisation during microsporogenesis by regulating radial microtubules (MT) organization in microspore mother cells. Seems to not have kinase activity. The protein is Serine/threonine-protein kinase RUNKEL of Arabidopsis thaliana (Mouse-ear cress).